Here is a 115-residue protein sequence, read N- to C-terminus: Large ribosomal subunit protein uL22 (115 aa).

Belongs to the universal ribosomal protein uL22 family. Part of the 50S ribosomal subunit.

Its function is as follows. This protein binds specifically to 23S rRNA; its binding is stimulated by other ribosomal proteins, e.g. L4, L17, and L20. It is important during the early stages of 50S assembly. It makes multiple contacts with different domains of the 23S rRNA in the assembled 50S subunit and ribosome. Functionally, the globular domain of the protein is located near the polypeptide exit tunnel on the outside of the subunit, while an extended beta-hairpin is found that lines the wall of the exit tunnel in the center of the 70S ribosome. In Thioalkalivibrio sulfidiphilus (strain HL-EbGR7), this protein is Large ribosomal subunit protein uL22.